The following is a 535-amino-acid chain: Glutamyl-tRNA reductase 3, chloroplastic (535 aa).

C131 (nucleophile) is an active-site residue. Substrate contacts are provided by residues 131 to 133 (CNR), S190, 195 to 197 (EGQ), and Q201. 272 to 277 (GAGKMG) provides a ligand contact to NADP(+).

The protein belongs to the glutamyl-tRNA reductase family. As to expression, primarily expressed in roots.

It localises to the plastid. The protein localises to the chloroplast. It catalyses the reaction (S)-4-amino-5-oxopentanoate + tRNA(Glu) + NADP(+) = L-glutamyl-tRNA(Glu) + NADPH + H(+). Its pathway is porphyrin-containing compound metabolism; protoporphyrin-IX biosynthesis; 5-aminolevulinate from L-glutamyl-tRNA(Glu): step 1/2. Catalyzes the NADPH-dependent reduction of glutamyl-tRNA(Glu) to glutamate 1-semialdehyde (GSA). This Hordeum vulgare (Barley) protein is Glutamyl-tRNA reductase 3, chloroplastic (HEMA3).